A 472-amino-acid polypeptide reads, in one-letter code: Dihydrolipoyl dehydrogenase 2 (472 aa).

Residues 39–47 (ERDAYGGTC), lysine 56, and alanine 118 contribute to the FAD site. Residues cysteine 47 and cysteine 52 are joined by a disulfide bond. NAD(+)-binding positions include 186 to 190 (GAGYI), glutamate 209, and 275 to 278 (AVGR). 2 residues coordinate FAD: aspartate 318 and alanine 326. Residue histidine 450 is the Proton acceptor of the active site.

This sequence belongs to the class-I pyridine nucleotide-disulfide oxidoreductase family. Homodimer. FAD serves as cofactor.

Its subcellular location is the cytoplasm. The catalysed reaction is N(6)-[(R)-dihydrolipoyl]-L-lysyl-[protein] + NAD(+) = N(6)-[(R)-lipoyl]-L-lysyl-[protein] + NADH + H(+). This chain is Dihydrolipoyl dehydrogenase 2 (lpdA2), found in Haloarcula marismortui (strain ATCC 43049 / DSM 3752 / JCM 8966 / VKM B-1809) (Halobacterium marismortui).